The primary structure comprises 344 residues: MSMTAQKALQRIVEHREILQDEMVQLMRQIMNSEVSGIMVAAILAGLRVKKETVGEIAGAATVMREFSRKVNVQDRTHLVDIVGTGGDGWHTFNISTCAMFVAAAAGAKVAKHGNRSVSSKSGSADVLEALGASIELQPLEVAEAIGCIGVGFMFAPIHHPVMQVVSPVRREMGVRTIFNILGPLTNPADAPNILMGVFDPDLVGIQVHVLHKLGAERALVVCGRDGMDELSLGTTTLVGELRGGRVCEYEVSPEDYGMAVSPISNLRVESSAESREMLLNVLAGKPGPALDVVALNAGAALYVAGVAQDIGHGVALAREVIFNGRARNILNQYVAFTRRPRNV.

5-phospho-alpha-D-ribose 1-diphosphate-binding positions include Gly84, 87–88 (GD), Thr92, 94–97 (NIST), 112–120 (KHGNRSVSS), and Ser124. An anthranilate-binding site is contributed by Gly84. Ser96 lines the Mg(2+) pocket. Asn115 provides a ligand contact to anthranilate. Arg170 contributes to the anthranilate binding site. 2 residues coordinate Mg(2+): Asp229 and Glu230.

The protein belongs to the anthranilate phosphoribosyltransferase family. In terms of assembly, homodimer. The cofactor is Mg(2+).

It catalyses the reaction N-(5-phospho-beta-D-ribosyl)anthranilate + diphosphate = 5-phospho-alpha-D-ribose 1-diphosphate + anthranilate. Its pathway is amino-acid biosynthesis; L-tryptophan biosynthesis; L-tryptophan from chorismate: step 2/5. Functionally, catalyzes the transfer of the phosphoribosyl group of 5-phosphorylribose-1-pyrophosphate (PRPP) to anthranilate to yield N-(5'-phosphoribosyl)-anthranilate (PRA). The chain is Anthranilate phosphoribosyltransferase from Xylella fastidiosa (strain M23).